The sequence spans 154 residues: Calmodulin-like protein 4 (154 aa).

EF-hand domains are found at residues 7-42, 43-78, 80-115, and 116-151; these read EQMVAFQEAFLLFDKNGDGCITLEELAAVTRSLGLE, PTDQELNDMMREVDTDGNGIIDFQEFLSLIARKMKD, DGDEELKEAFEVLDKDQNGFISPTELRTVMTNLGEK, and MTDEEVEQMIREADTDGDGQVNYDEFVIMMKNAERK. D20, N22, D24, C26, E31, D56, D58, N60, E67, D93, D95, N97, and E104 together coordinate Ca(2+). At K115 the chain carries N6,N6,N6-trimethyllysine. Residues D129, D131, D133, Q135, and E140 each coordinate Ca(2+).

It belongs to the calmodulin family.

Functionally, potential calcium sensor. The sequence is that of Calmodulin-like protein 4 (CML4) from Oryza sativa subsp. japonica (Rice).